A 324-amino-acid chain; its full sequence is Elongation factor P--(R)-beta-lysine ligase (324 aa).

75–77 serves as a coordination point for substrate; sequence SPE. Residues 99–101 and Asn108 contribute to the ATP site; that span reads RNQ. Substrate is bound at residue Tyr117. 243 to 244 serves as a coordination point for ATP; the sequence is EL. Glu250 provides a ligand contact to substrate. Residue Gly299 coordinates ATP.

This sequence belongs to the class-II aminoacyl-tRNA synthetase family. EpmA subfamily. Homodimer.

It catalyses the reaction D-beta-lysine + L-lysyl-[protein] + ATP = N(6)-((3R)-3,6-diaminohexanoyl)-L-lysyl-[protein] + AMP + diphosphate + H(+). In terms of biological role, with EpmB is involved in the beta-lysylation step of the post-translational modification of translation elongation factor P (EF-P). Catalyzes the ATP-dependent activation of (R)-beta-lysine produced by EpmB, forming a lysyl-adenylate, from which the beta-lysyl moiety is then transferred to the epsilon-amino group of a conserved specific lysine residue in EF-P. This Buchnera aphidicola subsp. Schizaphis graminum (strain Sg) protein is Elongation factor P--(R)-beta-lysine ligase.